Here is a 141-residue protein sequence, read N- to C-terminus: Large ribosomal subunit protein uL11 (141 aa).

Belongs to the universal ribosomal protein uL11 family. Part of the ribosomal stalk of the 50S ribosomal subunit. Interacts with L10 and the large rRNA to form the base of the stalk. L10 forms an elongated spine to which L12 dimers bind in a sequential fashion forming a multimeric L10(L12)X complex. In terms of processing, one or more lysine residues are methylated.

Functionally, forms part of the ribosomal stalk which helps the ribosome interact with GTP-bound translation factors. The chain is Large ribosomal subunit protein uL11 from Clostridium novyi (strain NT).